The sequence spans 938 residues: E3 ubiquitin-protein ligase CBL-B (938 aa).

The tract at residues 35–167 (PPKQAAADRR…KAIFPNGQFQ (133 aa)) is 4H. A Cbl-PTB domain is found at 35-343 (PPKQAAADRR…GRSYNPDLTG (309 aa)). The segment at 168–240 (GDNFRITKAD…FEFDIFTRLF (73 aa)) is EF-hand-like. The Ca(2+) site is built by Asp221, Thr223, Asn225, Tyr227, and Glu232. Residues 241 to 343 (QPWGSILRNW…GRSYNPDLTG (103 aa)) form an SH2-like region. Phosphoserine; by PKC/PRKCQ is present on Ser282. Arg286 lines the 4-O-phospho-L-tyrosine pocket. Residues 344 to 372 (LCEPTPHDHIKVTQEQYELYCEMGSTFQL) are linker. Tyr363 bears the Phosphotyrosine mark. The RING-type zinc finger occupies 373-412 (CKICAENDKDVKIEPCGHLMCTSCLTAWQESDGQGCPFCR). The disordered stretch occupies residues 465-588 (ASVRKCTDRQ…SVPSRDQPMP (124 aa)). The segment covering 473–486 (RQNSPVTSPGSSPL) has biased composition (polar residues). 6 positions are modified to phosphoserine: Ser476, Ser480, Ser484, Ser521, Ser525, and Ser529. Positions 543–567 (PLPAPPPPLRDPPPPPERPPPIPPD) are interaction with VAV1. The span at 544–566 (LPAPPPPLRDPPPPPERPPPIPP) shows a compositional bias: pro residues. Phosphoserine is present on Ser633. Tyr664 and Tyr708 each carry phosphotyrosine. Disordered stretches follow at residues 702 to 725 (EEDD…PSHC) and 771 to 885 (DALP…EAAL). A compositionally biased stretch (polar residues) spans 714–724 (HPVSLNSQPSH). Over residues 775–784 (PSLPPPPPPA) the composition is skewed to pro residues. The segment covering 794–804 (PPGSSSRPSSG) has biased composition (low complexity). Residues 839–855 (NRASQDYDQLPSSSDGS) show a composition bias toward polar residues. Tyr845 bears the Phosphotyrosine mark. The interaction with SH3KBP1 stretch occupies residues 847–883 (QLPSSSDGSQAPARPPKPRPRRTAPEIHHRKPHGPEA). The span at 862-878 (PKPRPRRTAPEIHHRKP) shows a compositional bias: basic residues. In terms of domain architecture, UBA spans 887–926 (NVDAKIAKLMGEGYAFEEVKRALEIAQNNLEVARSILREF).

As to quaternary structure, interacts with SH3 domain-containing proteins LCK, CRK and SORBS1. Interacts with LCP2 and ZAP70. Interacts with CBL. Interacts with SH3 domain-containing proteins VAV1, FYN, FGR, PLCG1, GRB2, CRKL, PIK3R1 and SH3KBP1/CIN85. Identified in heterotrimeric complexes with SH3KBP1/CIN85, CD2AP and ARHGEF7, where one CBLB peptide binds two copies of the other protein. Interacts with poly-ubiquitinated proteins. Dimerization is required for the binding of poly-ubiquitin, but not for the binding of mono-ubiquitin. Interacts with EGFR (phosphorylated). Interacts with IFT20. In terms of processing, phosphorylated on tyrosine and serine residues upon TCR or BCR activation, and upon various types of cell stimulation. Auto-ubiquitinated upon EGF-mediated cell activation or upon T-cell costimulation by CD28; which promotes proteasomal degradation.

It localises to the cytoplasm. The enzyme catalyses S-ubiquitinyl-[E2 ubiquitin-conjugating enzyme]-L-cysteine + [acceptor protein]-L-lysine = [E2 ubiquitin-conjugating enzyme]-L-cysteine + N(6)-ubiquitinyl-[acceptor protein]-L-lysine.. It participates in protein modification; protein ubiquitination. E3 ubiquitin-protein ligase which accepts ubiquitin from specific E2 ubiquitin-conjugating enzymes, and transfers it to substrates, generally promoting their degradation by the proteasome. Negatively regulates TCR (T-cell receptor), BCR (B-cell receptor) and FCER1 (high affinity immunoglobulin epsilon receptor) signal transduction pathways. In naive T-cells, inhibits VAV1 activation upon TCR engagement and imposes a requirement for CD28 costimulation for proliferation and IL-2 production. Also acts by promoting PIK3R1/p85 ubiquitination, which impairs its recruitment to the TCR and subsequent activation. In activated T-cells, inhibits PLCG1 activation and calcium mobilization upon restimulation and promotes anergy. In B-cells, acts by ubiquitinating SYK and promoting its proteasomal degradation. Slightly promotes SRC ubiquitination. May be involved in EGFR ubiquitination and internalization. May be functionally coupled with the E2 ubiquitin-protein ligase UB2D3. In association with CBL, required for proper feedback inhibition of ciliary platelet-derived growth factor receptor-alpha (PDGFRA) signaling pathway via ubiquitination and internalization of PDGFRA. The polypeptide is E3 ubiquitin-protein ligase CBL-B (Cblb) (Rattus norvegicus (Rat)).